The following is a 454-amino-acid chain: uncharacterized protein (454 aa).

This sequence belongs to the outer membrane factor (OMF) (TC 1.B.17) family.

This is an uncharacterized protein from Haemophilus influenzae (strain ATCC 51907 / DSM 11121 / KW20 / Rd).